The primary structure comprises 326 residues: UDP-N-acetylglucosamine transporter (326 aa).

8 consecutive transmembrane segments (helical) span residues asparagine 4–methionine 24, leucine 38–valine 58, leucine 136–tryptophan 156, phenylalanine 174–phenylalanine 194, leucine 212–valine 232, glutamine 243–isoleucine 263, isoleucine 269–tryptophan 289, and phenylalanine 293–tyrosine 313.

Belongs to the nucleotide-sugar transporter family. SLC35A subfamily. Interacts with SLC35A2; the interaction is reduced in the presence of SLC35A4. Found in a complex with SLC35A2 and SLC35A4. Interacts with MGAT4B. In terms of processing, O-Glcnacylation regulates the stability of SLC35A3 and the specific complex formation with MGAT4B.

It localises to the golgi apparatus membrane. The enzyme catalyses UMP(out) + UDP-N-acetyl-alpha-D-glucosamine(in) = UMP(in) + UDP-N-acetyl-alpha-D-glucosamine(out). Transports diphosphate-N-acetylglucosamine (UDP-GlcNAc) from the cytosol into the lumen of the Golgi apparatus, functioning as an antiporter that exchanges UDP-N-acetyl-alpha-D-glucosamine for UMP. May supply UDP-GlcNAc as substrate for Golgi-resident glycosyltransferases that generate highly branched, multiantennary complex N-glycans and keratan sulfate. However, the exact role of SLC35A3 still needs to be elucidated, it could be a member of a catalytically more efficient multiprotein complex rather than function independently as a single transporter. This is UDP-N-acetylglucosamine transporter (Slc35a3) from Mus musculus (Mouse).